A 519-amino-acid chain; its full sequence is Developmental regulatory protein wetA (519 aa).

Disordered stretches follow at residues 105 to 165 (PSRP…MRSS), 270 to 294 (PSSADDMFSSSHSSDPHSISSWQSD), 301 to 320 (LSFTPDLQGQDSQWWSPMPS), 325 to 344 (QQASYLESPTPVRTTQNVGN), 389 to 452 (SQIH…GSNK), and 470 to 495 (LTGVAPSGSSKTKARREQEARDRRRK). The segment covering 108–118 (PTATHALSTSP) has biased composition (low complexity). Residues 155 to 165 (QSFSPSLMRSS) are compositionally biased toward polar residues. A compositionally biased stretch (polar residues) spans 301–315 (LSFTPDLQGQDSQWW). The segment covering 389-400 (SQIHNVSRSPSL) has biased composition (polar residues). Positions 419–428 (PTHRRTHSRK) are enriched in basic residues. Low complexity predominate over residues 435–452 (NAPKPAKASGSSSRGSNK).

It belongs to the wetA family.

BrlA, abaA and wetA are pivotal regulators of conidiophore development and conidium maturation. They act individually and together to regulate their own expression and that of numerous other sporulation-specific genes. This Penicillium camembertii protein is Developmental regulatory protein wetA.